The sequence spans 586 residues: Glutamine--tRNA ligase (586 aa).

The 'HIGH' region signature appears at 58–68 (PEPNGYLHIGH). Residues 59 to 61 (EPN) and 65 to 71 (HIGHAKS) each bind ATP. Positions 91 and 240 each coordinate L-glutamine. ATP contacts are provided by residues Thr259 and 294–295 (RL). Residues 301–305 (VTSKR) carry the 'KMSKS' region motif.

It belongs to the class-I aminoacyl-tRNA synthetase family. In terms of assembly, monomer.

The protein localises to the cytoplasm. The catalysed reaction is tRNA(Gln) + L-glutamine + ATP = L-glutaminyl-tRNA(Gln) + AMP + diphosphate. The chain is Glutamine--tRNA ligase from Bordetella avium (strain 197N).